A 364-amino-acid polypeptide reads, in one-letter code: Alanine racemase (364 aa).

Residue Lys-34 is the Proton acceptor; specific for D-alanine of the active site. Position 34 is an N6-(pyridoxal phosphate)lysine (Lys-34). A substrate-binding site is contributed by Arg-129. Residue Tyr-259 is the Proton acceptor; specific for L-alanine of the active site. Met-307 lines the substrate pocket.

Belongs to the alanine racemase family. Pyridoxal 5'-phosphate serves as cofactor.

It catalyses the reaction L-alanine = D-alanine. Its pathway is amino-acid biosynthesis; D-alanine biosynthesis; D-alanine from L-alanine: step 1/1. Catalyzes the interconversion of L-alanine and D-alanine. May also act on other amino acids. The polypeptide is Alanine racemase (alr) (Coxiella burnetii (strain CbuG_Q212) (Coxiella burnetii (strain Q212))).